A 213-amino-acid polypeptide reads, in one-letter code: Uridine kinase (213 aa).

An ATP-binding site is contributed by glycine 15–serine 22.

It belongs to the uridine kinase family.

Its subcellular location is the cytoplasm. The enzyme catalyses uridine + ATP = UMP + ADP + H(+). It catalyses the reaction cytidine + ATP = CMP + ADP + H(+). The protein operates within pyrimidine metabolism; CTP biosynthesis via salvage pathway; CTP from cytidine: step 1/3. It functions in the pathway pyrimidine metabolism; UMP biosynthesis via salvage pathway; UMP from uridine: step 1/1. This is Uridine kinase from Serratia proteamaculans (strain 568).